The chain runs to 505 residues: 4-alpha-glucanotransferase (505 aa).

The protein belongs to the disproportionating enzyme family.

The protein resides in the cytoplasm. It catalyses the reaction Transfers a segment of a (1-&gt;4)-alpha-D-glucan to a new position in an acceptor, which may be glucose or a (1-&gt;4)-alpha-D-glucan.. The polypeptide is 4-alpha-glucanotransferase (malQ) (Streptococcus pneumoniae serotype 4 (strain ATCC BAA-334 / TIGR4)).